Here is a 445-residue protein sequence, read N- to C-terminus: MAITIVSVRARQIFDSRGNPTVEADVKLSDGYLARAAVPSGASTGIYEALELRDGGSDYLGKGVSKAVENVNIIIGPALVGKDPTDQVGIDNFMVQQLDGTVNEWGWCKQKLGANAILAVSLAVCKAGAHVKGIPLYEHIANLAGNKNLVLPVPAFNVINGGSHAGNKLAMQEFMILPVGASSFKEAMKMGAEVYHHLKSVIKKKYGQDATNVGDEGGFAPNIQENKEGLELLKTAIAKAGYTGKVVIGMDVAASEFYGSDQTYDLNFKEENNNGSQKISGEALKDLYKSFVAEYPIVSIEDPFDQDDWAHYAKLTSEIGEKVQIVGDDLLVTNPKRVEKAIKEKACNALLLKVNQIGSVTESIEAVKMSKRAGWGVMASHRSGETEDTFIADLSVGLATGQIKTGAPCRSERLAKYNQLLRIEEELGSEAVYAGANFRKPVEPY.

Residues His-164 and Glu-173 each coordinate substrate. Catalysis depends on Glu-216, which acts as the Proton donor. Residues Asp-251, Glu-301, and Asp-328 each contribute to the Mg(2+) site. Positions 301 and 328 each coordinate substrate. The active-site Proton acceptor is Lys-353. Residues 380–383 (SHRS) and Lys-404 contribute to the substrate site.

It belongs to the enolase family. As to quaternary structure, homodimer. Mg(2+) serves as cofactor.

The protein resides in the cytoplasm. The catalysed reaction is (2R)-2-phosphoglycerate = phosphoenolpyruvate + H2O. Its pathway is carbohydrate degradation; glycolysis; pyruvate from D-glyceraldehyde 3-phosphate: step 4/5. The polypeptide is Enolase 1 (ENO1) (Hevea brasiliensis (Para rubber tree)).